Here is a 362-residue protein sequence, read N- to C-terminus: Aminomethyltransferase (362 aa).

The protein belongs to the GcvT family. In terms of assembly, the glycine cleavage system is composed of four proteins: P, T, L and H.

The catalysed reaction is N(6)-[(R)-S(8)-aminomethyldihydrolipoyl]-L-lysyl-[protein] + (6S)-5,6,7,8-tetrahydrofolate = N(6)-[(R)-dihydrolipoyl]-L-lysyl-[protein] + (6R)-5,10-methylene-5,6,7,8-tetrahydrofolate + NH4(+). Its function is as follows. The glycine cleavage system catalyzes the degradation of glycine. This is Aminomethyltransferase from Colwellia psychrerythraea (strain 34H / ATCC BAA-681) (Vibrio psychroerythus).